Here is a 151-residue protein sequence, read N- to C-terminus: Macrodomain Ter protein (151 aa).

Belongs to the MatP family. Homodimer.

Its subcellular location is the cytoplasm. Its function is as follows. Required for spatial organization of the terminus region of the chromosome (Ter macrodomain) during the cell cycle. Prevents early segregation of duplicated Ter macrodomains during cell division. Binds specifically to matS, which is a 13 bp signature motif repeated within the Ter macrodomain. In Yersinia pseudotuberculosis serotype IB (strain PB1/+), this protein is Macrodomain Ter protein.